The chain runs to 212 residues: 2,3-bisphosphoglycerate-dependent phosphoglycerate mutase (212 aa).

Substrate-binding positions include 9 to 16, 22 to 23, arginine 61, 88 to 91, lysine 99, 115 to 116, and 159 to 160; these read RHGQSEWN, TG, ERDY, RR, and GN. The Tele-phosphohistidine intermediate role is filled by histidine 10. Glutamate 88 functions as the Proton donor/acceptor in the catalytic mechanism.

Belongs to the phosphoglycerate mutase family. BPG-dependent PGAM subfamily. As to quaternary structure, homodimer.

It carries out the reaction (2R)-2-phosphoglycerate = (2R)-3-phosphoglycerate. It participates in carbohydrate degradation; glycolysis; pyruvate from D-glyceraldehyde 3-phosphate: step 3/5. Functionally, catalyzes the interconversion of 2-phosphoglycerate and 3-phosphoglycerate. This Methylorubrum populi (strain ATCC BAA-705 / NCIMB 13946 / BJ001) (Methylobacterium populi) protein is 2,3-bisphosphoglycerate-dependent phosphoglycerate mutase.